Reading from the N-terminus, the 505-residue chain is Aspartyl/glutamyl-tRNA(Asn/Gln) amidotransferase subunit B (505 aa).

The protein belongs to the GatB/GatE family. GatB subfamily. Heterotrimer of A, B and C subunits.

It carries out the reaction L-glutamyl-tRNA(Gln) + L-glutamine + ATP + H2O = L-glutaminyl-tRNA(Gln) + L-glutamate + ADP + phosphate + H(+). The enzyme catalyses L-aspartyl-tRNA(Asn) + L-glutamine + ATP + H2O = L-asparaginyl-tRNA(Asn) + L-glutamate + ADP + phosphate + 2 H(+). Its function is as follows. Allows the formation of correctly charged Asn-tRNA(Asn) or Gln-tRNA(Gln) through the transamidation of misacylated Asp-tRNA(Asn) or Glu-tRNA(Gln) in organisms which lack either or both of asparaginyl-tRNA or glutaminyl-tRNA synthetases. The reaction takes place in the presence of glutamine and ATP through an activated phospho-Asp-tRNA(Asn) or phospho-Glu-tRNA(Gln). The protein is Aspartyl/glutamyl-tRNA(Asn/Gln) amidotransferase subunit B of Kineococcus radiotolerans (strain ATCC BAA-149 / DSM 14245 / SRS30216).